Consider the following 568-residue polypeptide: Putative ABC transporter ATP-binding protein EF_2153 (568 aa).

ABC transporter domains follow at residues 6–247 (ITFN…GIRE) and 301–535 (LRLE…ASLK). ATP is bound by residues 40–47 (GPSGSGKS) and 335–342 (GKNGAGKS).

Belongs to the ABC transporter superfamily.

It localises to the cell membrane. Functionally, probably part of an ABC transporter complex. Responsible for energy coupling to the transport system. This chain is Putative ABC transporter ATP-binding protein EF_2153, found in Enterococcus faecalis (strain ATCC 700802 / V583).